The sequence spans 179 residues: UPF0227 protein Sbal195_2522 (179 aa).

The protein belongs to the UPF0227 family.

The sequence is that of UPF0227 protein Sbal195_2522 from Shewanella baltica (strain OS195).